We begin with the raw amino-acid sequence, 67 residues long: V-type proton ATPase subunit e (67 aa).

At 1–2 (MG) the chain is on the lumenal side. The chain crosses the membrane as a helical span at residues 3–23 (GLVVLLVGLLTALMSVVSYYV). The Cytoplasmic portion of the chain corresponds to 24 to 35 (SPKGNNTSTWQM). Residues 36-56 (SLILTFSCCYLLWAITYLAQL) traverse the membrane as a helical segment. Residues 57-67 (HPLEAPSRVLE) lie on the Lumenal side of the membrane.

Belongs to the V-ATPase e1/e2 subunit family. In terms of assembly, V-ATPase is a heteromultimeric enzyme composed of a peripheral catalytic V1 complex (components A to H) attached to an integral membrane V0 proton pore complex (components: a, c, c', c'', d, e, f and VOA1).

It localises to the vacuole membrane. Its function is as follows. Subunit of the V0 complex of vacuolar(H+)-ATPase (V-ATPase), a multisubunit enzyme composed of a peripheral complex (V1) that hydrolyzes ATP and a membrane integral complex (V0) that translocates protons. V-ATPase is responsible for acidifying and maintaining the pH of intracellular compartments. This Schizosaccharomyces pombe (strain 972 / ATCC 24843) (Fission yeast) protein is V-type proton ATPase subunit e (vma9).